Here is a 502-residue protein sequence, read N- to C-terminus: Probable RNA exonuclease C9B6.11c (502 aa).

A disordered region spans residues 338 to 379 (SELEEKNASTKTENDSNEDDKEECQSSSTSSVPESTASTPKK). The segment covering 341-351 (EEKNASTKTEN) has biased composition (basic and acidic residues). Residues 363–376 (SSSTSSVPESTAST) are compositionally biased toward low complexity.

It belongs to the CCR4/nocturin family.

The protein resides in the cytoplasm. Its subcellular location is the nucleus. In Schizosaccharomyces pombe (strain 972 / ATCC 24843) (Fission yeast), this protein is Probable RNA exonuclease C9B6.11c.